An 825-amino-acid chain; its full sequence is Exocyst complex component SEC10a (825 aa).

The stretch at 244–266 (RGLEVAVANLQDYCNELENRLLS) forms a coiled coil.

Belongs to the SEC10 family. As to quaternary structure, the exocyst complex is composed of SEC3, SEC5, SEC6, SEC8, SEC10, EXO70A1 and EXO84B. Interacts with EXO84B. Binds to EXO70E2. Binds directly to B1L. Expressed in seedlings, roots, leaves and flowers.

It localises to the cytoplasm. Its subcellular location is the cytosol. The protein localises to the secreted. The protein resides in the extracellular exosome. Functionally, component of the exocyst complex involved in the docking of exocytic vesicles with fusion sites on the plasma membrane during regulated or polarized secretion. Involved in polarized cell growth and organ morphogenesis. During cytokinesis, involved in cell plate initiation, cell plate maturation and formation of new primary cell wall. The chain is Exocyst complex component SEC10a from Arabidopsis thaliana (Mouse-ear cress).